The sequence spans 134 residues: Large ribosomal subunit protein bL19 (134 aa).

The tract at residues 110 to 134 (ARLHQEEGPSSAAPASTPPAAAPQA) is disordered. Positions 125 to 134 (STPPAAAPQA) are enriched in pro residues.

The protein belongs to the bacterial ribosomal protein bL19 family.

Functionally, this protein is located at the 30S-50S ribosomal subunit interface and may play a role in the structure and function of the aminoacyl-tRNA binding site. This is Large ribosomal subunit protein bL19 from Anaeromyxobacter sp. (strain Fw109-5).